The sequence spans 448 residues: Protease Do-like 8, chloroplastic (448 aa).

A serine protease region spans residues 152 to 333 (EGNGSGVVWD…IPSSTVLKIV (182 aa)). Catalysis depends on charge relay system residues His-171, Asp-214, and Ser-292. A PDZ domain is found at 336–433 (LIQFSKVLRA…DKVTLKIKRG (98 aa)).

Belongs to the peptidase S1C family.

Its subcellular location is the plastid. The protein localises to the chloroplast thylakoid lumen. Functionally, probable serine protease. The polypeptide is Protease Do-like 8, chloroplastic (DEGP8) (Arabidopsis thaliana (Mouse-ear cress)).